Reading from the N-terminus, the 160-residue chain is MTHCCSPGCQPTCCRTTCCRTTCWQPTIVTTCSSTPCCQPSCCVSSCCQPYCHPTCCQNTCCRTTCCQPTCVTSCCQPSCCSTPCYQPICCGSSCCGQTSCGSSCGQSSSCAPVYCRRTCYHPTTVCLPGCLNQSCGSSCCQPCYCPACCVSSCCQHSCC.

Tandem repeats lie at residues 4-8 (CCSPG), 13-17 (CCRTT), 18-22 (CCRTT), 37-41 (CCQPS), 42-46 (CCVSS), 47-51 (CCQPY), 56-60 (CCQNT), 61-65 (CCRTT), 66-70 (CCQPT), 75-79 (CCQPS), 80-84 (CCSTP), 90-94 (CCGSS), 95-99 (CCGQT), 140-144 (CCQPC), 149-153 (CCVSS), and 154-158 (CCQHS). A 16 X 5 AA repeats of C-C-[GSVRQ]-[QTSPHN]-[TPSGYC] region spans residues 4 to 158 (CCSPGCQPTC…CCVSSCCQHS (155 aa)).

It belongs to the KRTAP type 9 family. Interacts with hair keratins.

Functionally, in the hair cortex, hair keratin intermediate filaments are embedded in an interfilamentous matrix, consisting of hair keratin-associated proteins (KRTAP), which are essential for the formation of a rigid and resistant hair shaft through their extensive disulfide bond cross-linking with abundant cysteine residues of hair keratins. The matrix proteins include the high-sulfur and high-glycine-tyrosine keratins. The sequence is that of Keratin-associated protein 9-6 from Homo sapiens (Human).